A 323-amino-acid polypeptide reads, in one-letter code: Acetyl-coenzyme A carboxylase carboxyl transferase subunit alpha (323 aa).

A CoA carboxyltransferase C-terminal domain is found at 39–293 (RLSKKSQQLT…RRALADSLRQ (255 aa)).

This sequence belongs to the AccA family. Acetyl-CoA carboxylase is a heterohexamer composed of biotin carboxyl carrier protein (AccB), biotin carboxylase (AccC) and two subunits each of ACCase subunit alpha (AccA) and ACCase subunit beta (AccD).

It localises to the cytoplasm. It catalyses the reaction N(6)-carboxybiotinyl-L-lysyl-[protein] + acetyl-CoA = N(6)-biotinyl-L-lysyl-[protein] + malonyl-CoA. It participates in lipid metabolism; malonyl-CoA biosynthesis; malonyl-CoA from acetyl-CoA: step 1/1. Component of the acetyl coenzyme A carboxylase (ACC) complex. First, biotin carboxylase catalyzes the carboxylation of biotin on its carrier protein (BCCP) and then the CO(2) group is transferred by the carboxyltransferase to acetyl-CoA to form malonyl-CoA. In Burkholderia orbicola (strain AU 1054), this protein is Acetyl-coenzyme A carboxylase carboxyl transferase subunit alpha.